Consider the following 968-residue polypeptide: RNA polymerase-associated protein RapA (968 aa).

A Helicase ATP-binding domain is found at Glu164 to Asp334. Residue Asp177–Thr184 participates in ATP binding. The DEAH box signature appears at Asp280–His283. The region spanning Arg490–Asp664 is the Helicase C-terminal domain.

Belongs to the SNF2/RAD54 helicase family. RapA subfamily. As to quaternary structure, interacts with the RNAP. Has a higher affinity for the core RNAP than for the holoenzyme. Its ATPase activity is stimulated by binding to RNAP.

Transcription regulator that activates transcription by stimulating RNA polymerase (RNAP) recycling in case of stress conditions such as supercoiled DNA or high salt concentrations. Probably acts by releasing the RNAP, when it is trapped or immobilized on tightly supercoiled DNA. Does not activate transcription on linear DNA. Probably not involved in DNA repair. The protein is RNA polymerase-associated protein RapA of Yersinia enterocolitica serotype O:8 / biotype 1B (strain NCTC 13174 / 8081).